We begin with the raw amino-acid sequence, 240 residues long: Aquaporin Z (240 aa).

2 helical membrane-spanning segments follow: residues 10 to 30 and 35 to 55; these read AIGT…AAGF and IGLV…AYAI. The short motif at 64–66 is the NPA 1 element; it reads NPA. Transmembrane regions (helical) follow at residues 82-102, 131-151, and 160-180; these read ILPY…LLYI, MMAC…IIMG, and GFAP…SIPV. An NPA 2 motif is present at residues 186 to 188; that stretch reads NPA. Residues 194-214 form a helical membrane-spanning segment; that stretch reads ALFVGGWAMAQLWLFWVAPLI.

It belongs to the MIP/aquaporin (TC 1.A.8) family. As to quaternary structure, homotetramer.

It localises to the cell inner membrane. It catalyses the reaction H2O(in) = H2O(out). In terms of biological role, channel that permits osmotically driven movement of water in both directions. It is involved in the osmoregulation and in the maintenance of cell turgor during volume expansion in rapidly growing cells. It mediates rapid entry or exit of water in response to abrupt changes in osmolarity. This is Aquaporin Z from Bradyrhizobium diazoefficiens (strain JCM 10833 / BCRC 13528 / IAM 13628 / NBRC 14792 / USDA 110).